Consider the following 135-residue polypeptide: Galectin-1 (135 aa).

N-acetylalanine is present on Ala2. One can recognise a Galectin domain in the interval Gly4–Asp135. N6-acetyllysine is present on residues Lys13 and Lys29. Residue Ser30 is modified to Phosphoserine. Residues His45–Arg49, His53, Asn62, and Trp69–Glu72 each bind a beta-D-galactoside. Lys108 carries the N6-acetyllysine; alternate modification. The residue at position 108 (Lys108) is an N6-succinyllysine; alternate. An N6-acetyllysine modification is found at Lys128.

In terms of assembly, homodimer. Binds LGALS3BP. Interacts with CD2, CD3, CD4, CD6, CD7, CD43, ALCAM and CD45. Interacts with laminin (via poly-N-acetyllactosamine). Interacts with SUSD2.

The protein resides in the secreted. Its subcellular location is the extracellular space. It is found in the extracellular matrix. In terms of biological role, lectin that binds beta-galactoside and a wide array of complex carbohydrates. Plays a role in regulating apoptosis, cell proliferation and cell differentiation. Inhibits CD45 protein phosphatase activity and therefore the dephosphorylation of Lyn kinase. Strong inducer of T-cell apoptosis. The chain is Galectin-1 (LGALS1) from Pongo abelii (Sumatran orangutan).